The chain runs to 279 residues: RNases MRP/P 32.9 kDa subunit (279 aa).

The residue at position 64 (Ser64) is a Phosphoserine.

Belongs to the eukaryotic/archaeal RNase P protein component 1 family. In terms of assembly, component of nuclear RNase P and RNase MRP complexes. RNase P consists of an RNA moiety and at least 9 protein subunits including POP1, POP3, POP4, POP5, POP6, POP7, POP8, RPP1 and RPR2. RNase MRP complex consists of an RNA moiety and at least 10 protein subunits including POP1, POP3, POP4, POP5, POP6, POP7, POP8, RMP1, RPP1 and SNM1, many of which are shared with the RNase P complex.

The protein localises to the nucleus. In terms of biological role, required for 5.8S rRNA and tRNA processing; associated with RNase MRP and RNase P. In Saccharomyces cerevisiae (strain ATCC 204508 / S288c) (Baker's yeast), this protein is RNases MRP/P 32.9 kDa subunit (POP4).